A 392-amino-acid polypeptide reads, in one-letter code: Gastricsin (392 aa).

An N-terminal signal peptide occupies residues 1–16 (MKWMVVALLCLPLLEA). The propeptide at 17–62 (SLLRVPLRKMKSIRETMKEQGVLKDFLKTHKYDPGQKYHFGNFGDY) is activation peptide. One can recognise a Peptidase A1 domain in the interval 76 to 389 (YFGEISIGTP…DMGNNKVGLA (314 aa)). D94 is an active-site residue. Disulfide bonds link C107-C112 and C270-C275. Residue D280 is part of the active site. C314 and C347 are joined by a disulfide.

It belongs to the peptidase A1 family.

It is found in the secreted. It catalyses the reaction More restricted specificity than pepsin A, but shows preferential cleavage at Tyr-|-Xaa bonds. High activity on hemoglobin.. Functionally, hydrolyzes a variety of proteins. In Rattus norvegicus (Rat), this protein is Gastricsin (Pgc).